The chain runs to 741 residues: Catalase-peroxidase 2 (741 aa).

Positions 1-28 (MQRNRIAKSVLAALAVIAMSAGSISARA) are cleaved as a signal peptide. The segment at residues 107 to 228 (WHGAGTYRTY…LAATQMGLIY (122 aa)) is a cross-link (tryptophyl-tyrosyl-methioninium (Trp-Tyr) (with M-254)). The Proton acceptor role is filled by H108. A cross-link (tryptophyl-tyrosyl-methioninium (Tyr-Met) (with W-107)) is located at residues 228–254 (YVNPEGPNGNPDPVAAAQDIREAFGRM). H269 contacts heme b.

Belongs to the peroxidase family. Peroxidase/catalase subfamily. In terms of assembly, homodimer or homotetramer. The cofactor is heme b. Formation of the three residue Trp-Tyr-Met cross-link is important for the catalase, but not the peroxidase activity of the enzyme.

The catalysed reaction is H2O2 + AH2 = A + 2 H2O. The enzyme catalyses 2 H2O2 = O2 + 2 H2O. Its function is as follows. Bifunctional enzyme with both catalase and broad-spectrum peroxidase activity. The sequence is that of Catalase-peroxidase 2 from Burkholderia vietnamiensis (strain G4 / LMG 22486) (Burkholderia cepacia (strain R1808)).